A 542-amino-acid polypeptide reads, in one-letter code: CTP synthase (542 aa).

Residues 1-266 (MATNYIFVTG…DDLICQRFRL (266 aa)) form an amidoligase domain region. Serine 14 provides a ligand contact to CTP. Position 14 (serine 14) interacts with UTP. Residues 15–20 (SLGKGI) and aspartate 72 contribute to the ATP site. Aspartate 72 and glutamate 140 together coordinate Mg(2+). CTP-binding positions include 147 to 149 (DIE), 187 to 192 (KTKPTQ), and lysine 223. UTP contacts are provided by residues 187–192 (KTKPTQ) and lysine 223. Position 239 to 241 (239 to 241 (KDV)) interacts with ATP. Residues 291-542 (TIGMVGKYVE…VKAAKENQKK (252 aa)) enclose the Glutamine amidotransferase type-1 domain. Glycine 352 serves as a coordination point for L-glutamine. The active-site Nucleophile; for glutamine hydrolysis is the cysteine 379. L-glutamine is bound by residues 380 to 383 (LGMQ), glutamate 403, and arginine 470. Active-site residues include histidine 515 and glutamate 517.

It belongs to the CTP synthase family. In terms of assembly, homotetramer.

The catalysed reaction is UTP + L-glutamine + ATP + H2O = CTP + L-glutamate + ADP + phosphate + 2 H(+). It carries out the reaction L-glutamine + H2O = L-glutamate + NH4(+). The enzyme catalyses UTP + NH4(+) + ATP = CTP + ADP + phosphate + 2 H(+). It participates in pyrimidine metabolism; CTP biosynthesis via de novo pathway; CTP from UDP: step 2/2. Its activity is regulated as follows. Allosterically activated by GTP, when glutamine is the substrate; GTP has no effect on the reaction when ammonia is the substrate. The allosteric effector GTP functions by stabilizing the protein conformation that binds the tetrahedral intermediate(s) formed during glutamine hydrolysis. Inhibited by the product CTP, via allosteric rather than competitive inhibition. In terms of biological role, catalyzes the ATP-dependent amination of UTP to CTP with either L-glutamine or ammonia as the source of nitrogen. Regulates intracellular CTP levels through interactions with the four ribonucleotide triphosphates. The chain is CTP synthase from Mannheimia succiniciproducens (strain KCTC 0769BP / MBEL55E).